We begin with the raw amino-acid sequence, 510 residues long: tRNA-2-methylthio-N(6)-dimethylallyladenosine synthase (510 aa).

The interval 1 to 25 is disordered; sequence MSGFNDSPVPESAEKADGLLSQERG. Positions 34 to 154 constitute an MTTase N-terminal domain; it reads RKLFVKSYGC…LPDLLRRVAH (121 aa). [4Fe-4S] cluster contacts are provided by Cys43, Cys79, Cys117, Cys195, Cys199, and Cys202. One can recognise a Radical SAM core domain in the interval 181 to 414; it reads AERGVGAFVT…QALLEEQRQA (234 aa). The TRAM domain maps to 417-479; that stretch reads KAMIGRVLPV…PNSFHGRLLA (63 aa). Over residues 484-493 the composition is skewed to polar residues; that stretch reads QESAQGQESA. The tract at residues 484–510 is disordered; that stretch reads QESAQGQESAQGMERMEQNARAWEVPV.

It belongs to the methylthiotransferase family. MiaB subfamily. Monomer. [4Fe-4S] cluster serves as cofactor.

It is found in the cytoplasm. It carries out the reaction N(6)-dimethylallyladenosine(37) in tRNA + (sulfur carrier)-SH + AH2 + 2 S-adenosyl-L-methionine = 2-methylsulfanyl-N(6)-dimethylallyladenosine(37) in tRNA + (sulfur carrier)-H + 5'-deoxyadenosine + L-methionine + A + S-adenosyl-L-homocysteine + 2 H(+). Its function is as follows. Catalyzes the methylthiolation of N6-(dimethylallyl)adenosine (i(6)A), leading to the formation of 2-methylthio-N6-(dimethylallyl)adenosine (ms(2)i(6)A) at position 37 in tRNAs that read codons beginning with uridine. The protein is tRNA-2-methylthio-N(6)-dimethylallyladenosine synthase of Beijerinckia indica subsp. indica (strain ATCC 9039 / DSM 1715 / NCIMB 8712).